A 729-amino-acid chain; its full sequence is Fatty acid oxidation complex subunit alpha (729 aa).

An enoyl-CoA hydratase/isomerase region spans residues 1 to 189 (MLYQSETLQL…KVGLVDAVVA (189 aa)). Position 296 (D296) interacts with substrate. Residues 311–729 (SAPKQAAVLG…LLDVSISQPA (419 aa)) form a 3-hydroxyacyl-CoA dehydrogenase region. Residues M324, D343, 400 to 402 (VVE), K407, and S429 contribute to the NAD(+) site. H450 functions as the For 3-hydroxyacyl-CoA dehydrogenase activity in the catalytic mechanism. NAD(+) is bound at residue N453. N500 and Y660 together coordinate substrate.

It in the N-terminal section; belongs to the enoyl-CoA hydratase/isomerase family. This sequence in the C-terminal section; belongs to the 3-hydroxyacyl-CoA dehydrogenase family. In terms of assembly, heterotetramer of two alpha chains (FadB) and two beta chains (FadA).

The enzyme catalyses a (3S)-3-hydroxyacyl-CoA + NAD(+) = a 3-oxoacyl-CoA + NADH + H(+). It carries out the reaction a (3S)-3-hydroxyacyl-CoA = a (2E)-enoyl-CoA + H2O. The catalysed reaction is a 4-saturated-(3S)-3-hydroxyacyl-CoA = a (3E)-enoyl-CoA + H2O. It catalyses the reaction (3S)-3-hydroxybutanoyl-CoA = (3R)-3-hydroxybutanoyl-CoA. The enzyme catalyses a (3Z)-enoyl-CoA = a 4-saturated (2E)-enoyl-CoA. It carries out the reaction a (3E)-enoyl-CoA = a 4-saturated (2E)-enoyl-CoA. It functions in the pathway lipid metabolism; fatty acid beta-oxidation. Involved in the aerobic and anaerobic degradation of long-chain fatty acids via beta-oxidation cycle. Catalyzes the formation of 3-oxoacyl-CoA from enoyl-CoA via L-3-hydroxyacyl-CoA. It can also use D-3-hydroxyacyl-CoA and cis-3-enoyl-CoA as substrate. The chain is Fatty acid oxidation complex subunit alpha from Yersinia enterocolitica serotype O:8 / biotype 1B (strain NCTC 13174 / 8081).